A 127-amino-acid chain; its full sequence is Cyclin-dependent protein kinase inhibitor SIM (127 aa).

The segment at 21-71 (RANTNRDDDGGGCTTPTSSDHKIPPTTATTPPPPPQKPRPPSTPSSLGIRS) is disordered. Positions 50–63 (TPPPPPQKPRPPST) are enriched in pro residues.

As to quaternary structure, interacts with CDKA-1. Interacts with CYCD2-1, CYCD3-2 and CYCD4-1. Interacts with CDKB1-1. Interacts with CPR5. In terms of tissue distribution, expressed in the shoot apical meristem, leaf primordia and the elongation zone of the root.

The protein resides in the nucleus. In terms of biological role, cyclin-dependent protein kinase (CDK) inhibitor that functions as a repressor of mitosis in the endoreduplication cell cycle. Inhibits the kinase activity of CYCD3-1/CDKA-1, CYCD2-1/CDKA-1 and CYCB1-1/CDKB1-1 complexes in a dose dependent manner. Cooperates with SMR1 and SMR2 to promote endoreplication during leaf development. Required for normal trichome endoreplicating cell cycles. Positive regulator of effector-triggered immunity (ETI). This Arabidopsis thaliana (Mouse-ear cress) protein is Cyclin-dependent protein kinase inhibitor SIM.